A 447-amino-acid polypeptide reads, in one-letter code: Pyruvate kinase (447 aa).

Arg-33 is a binding site for substrate. The K(+) site is built by Asn-35, Ser-37, and Asp-61. Residue Asn-35–His-38 participates in ATP binding. Residue Arg-68 participates in ATP binding. Glu-203 contributes to the Mg(2+) binding site. The substrate site is built by Gly-226, Asp-227, and Thr-259. Residue Asp-227 coordinates Mg(2+).

The protein belongs to the pyruvate kinase family. As to quaternary structure, homotetramer. It depends on Mg(2+) as a cofactor. K(+) is required as a cofactor.

It catalyses the reaction pyruvate + ATP = phosphoenolpyruvate + ADP + H(+). Its pathway is carbohydrate degradation; glycolysis; pyruvate from D-glyceraldehyde 3-phosphate: step 5/5. This chain is Pyruvate kinase, found in Methanocaldococcus jannaschii (strain ATCC 43067 / DSM 2661 / JAL-1 / JCM 10045 / NBRC 100440) (Methanococcus jannaschii).